The sequence spans 219 residues: Ribose-5-phosphate isomerase A (219 aa).

Substrate-binding positions include 28-31 (SGST), 81-84 (DGAD), and 94-97 (KGGG). The active-site Proton acceptor is Glu103. Residue Lys121 coordinates substrate.

It belongs to the ribose 5-phosphate isomerase family. In terms of assembly, homodimer.

The catalysed reaction is aldehydo-D-ribose 5-phosphate = D-ribulose 5-phosphate. Its pathway is carbohydrate degradation; pentose phosphate pathway; D-ribose 5-phosphate from D-ribulose 5-phosphate (non-oxidative stage): step 1/1. Its function is as follows. Catalyzes the reversible conversion of ribose-5-phosphate to ribulose 5-phosphate. The polypeptide is Ribose-5-phosphate isomerase A (Haemophilus influenzae (strain PittEE)).